A 459-amino-acid chain; its full sequence is Putrescine aminotransferase (459 aa).

Pyridoxal 5'-phosphate-binding positions include 150 to 151 and glutamine 274; that span reads GT. Lysine 300 bears the N6-(pyridoxal phosphate)lysine mark. Threonine 332 lines the pyridoxal 5'-phosphate pocket.

This sequence belongs to the class-III pyridoxal-phosphate-dependent aminotransferase family. Putrescine aminotransferase subfamily. The cofactor is pyridoxal 5'-phosphate.

The catalysed reaction is an alkane-alpha,omega-diamine + 2-oxoglutarate = an omega-aminoaldehyde + L-glutamate. It carries out the reaction putrescine + 2-oxoglutarate = 1-pyrroline + L-glutamate + H2O. The enzyme catalyses cadaverine + 2-oxoglutarate = 5-aminopentanal + L-glutamate. Its pathway is amine and polyamine degradation; putrescine degradation; 4-aminobutanal from putrescine (transaminase route): step 1/1. Catalyzes the aminotransferase reaction from putrescine to 2-oxoglutarate, leading to glutamate and 4-aminobutanal, which spontaneously cyclizes to form 1-pyrroline. This is the first step in one of two pathways for putrescine degradation, where putrescine is converted into 4-aminobutanoate (gamma-aminobutyrate or GABA) via 4-aminobutanal. Also functions as a cadaverine transaminase in a a L-lysine degradation pathway to succinate that proceeds via cadaverine, glutarate and L-2-hydroxyglutarate. The chain is Putrescine aminotransferase from Salmonella paratyphi B (strain ATCC BAA-1250 / SPB7).